A 260-amino-acid chain; its full sequence is Caveolae-associated protein 3 (260 aa).

Residues 1–84 are interaction with CAVIN1; sequence MGESALESGP…SNTLAQLLAK (84 aa). Positions 20–78 are leucine-zipper; sequence VHAVTVVTLLEKLATMLETLRERQGGLAQRQGGLAGSVRRIQSNLGALSRSHDTTSNTL. Phosphoserine is present on residues serine 62 and serine 70. Lysine 128 participates in a covalent cross-link: Glycyl lysine isopeptide (Lys-Gly) (interchain with G-Cter in SUMO2). An interaction with CAV1 region spans residues 135 to 201; that stretch reads AKAFQKAPEP…SGRKGHAAPT (67 aa). Residues 140 to 260 are disordered; it reads KAPEPLGPVE…AAVLQVESAA (121 aa). Positions 157-168 are enriched in acidic residues; sequence AEAEESSDEEEP. Phosphoserine occurs at positions 162, 163, and 171. Residues 201-210 are compositionally biased toward pro residues; sequence TPTPVKPPRL.

This sequence belongs to the CAVIN family. As to quaternary structure, component of the CAVIN complex composed of CAVIN1, CAVIN2, CAVIN3 and CAVIN4. Interacts with PRKCD and with phosphatidylserine. Phosphatidylserine may form a bridge between PKC and PKC-binding partners and stabilize the binding. Interacts with PER2. Interacts with CAVIN1 and EPS15L1. Interacts (via leucine-zipper domain) with CAV1 in a cholesterol-sensitive manner. Post-translationally, in vitro, phosphorylated by PRKCD.

The protein localises to the cytoplasm. It localises to the membrane. It is found in the caveola. The protein resides in the cytosol. Functionally, regulates the traffic and/or budding of caveolae. Plays a role in caveola formation in a tissue-specific manner. Required for the formation of caveolae in smooth muscle but not in the lung and heart endothelial cells. Regulates the equilibrium between cell surface-associated and cell surface-dissociated caveolae by promoting the rapid release of caveolae from the cell surface. Plays a role in the regulation of the circadian clock. Modulates the period length and phase of circadian gene expression and also regulates expression and interaction of the core clock components PER1/2 and CRY1/2. This Bos taurus (Bovine) protein is Caveolae-associated protein 3 (CAVIN3).